The sequence spans 814 residues: Protein ADP-ribosyltransferase PARP3 (814 aa).

2 stretches are compositionally biased toward basic and acidic residues: residues 1 to 19 and 27 to 48; these read MKVH…EQKG and EGKL…DDGR. The interval 1–52 is disordered; the sequence is MKVHETRSHAHMSGDEQKGNLRKHKAEGKLPESEQSQKKAKPENDDGRSVNG. The PADR1 zinc-binding domain maps to 38-186; that stretch reads KKAKPENDDG…KRELGSADKP (149 aa). The interval 105 to 150 is zinc ribbon; the sequence is GALAKCPLCGGTLICDNEKRFVCGGEISEWCSCVFSTKDPPRKEEP. The Zn(2+) site is built by C110, C113, C127, and C137. 2 TPR repeats span residues 182–215 and 277–310; these read SADK…NGGK and DLSV…YGKR. Residues 187–274 form the BRCT domain; it reads FVGMMISLMG…EAQPLEAYDV (88 aa). The WGR domain occupies 322–422; it reads GGKIFEKDGL…KKIQKKPHKF (101 aa). The PARP alpha-helical domain occupies 449-568; that stretch reads HCKLDSFVAN…DINTASRLIG (120 aa). A PARP catalytic domain is found at 577–808; it reads DPLSDRYKKL…VKYEEKGTEI (232 aa).

Belongs to the ARTD/PARP family.

It localises to the nucleus. It catalyses the reaction L-aspartyl-[protein] + NAD(+) = 4-O-(ADP-D-ribosyl)-L-aspartyl-[protein] + nicotinamide. It carries out the reaction L-glutamyl-[protein] + NAD(+) = 5-O-(ADP-D-ribosyl)-L-glutamyl-[protein] + nicotinamide. Involved in the base excision repair (BER) pathway, by catalyzing the poly(ADP-ribosyl)ation of a limited number of acceptor proteins involved in chromatin architecture and in DNA metabolism. This modification follows DNA damages and appears as an obligatory step in a detection/signaling pathway leading to the reparation of DNA strand breaks. This chain is Protein ADP-ribosyltransferase PARP3 (PARP3), found in Arabidopsis thaliana (Mouse-ear cress).